A 190-amino-acid chain; its full sequence is CASP-like protein 2U2 (190 aa).

Residues 1–10 (MGEKMQGFQG) are Cytoplasmic-facing. The helical transmembrane segment at 11–31 (WSIGIRFLTSCVSIASLILLL) threads the bilayer. Residues 32 to 59 (KSKQTVQVSVGLDYVTQQVKYSDTSAFV) are Extracellular-facing. The chain crosses the membrane as a helical span at residues 60–80 (YLVFSDILVAVYCIVVLVGLI). The Cytoplasmic portion of the chain corresponds to 81–94 (PAALGKSHPGKAGQ). A helical transmembrane segment spans residues 95-115 (WAIFIFDQVLAYVLLAAASSA). Residues 116 to 144 (TEVAYLADKGMAKTSWEAVCPRFAHFCHT) are Extracellular-facing. The helical transmembrane segment at 145-165 (VMASISLSFVAVLLLALLAVV) threads the bilayer. Over 166 to 190 (SASGLFGRFYRRPLFAVKMRHNTLI) the chain is Cytoplasmic.

The protein belongs to the Casparian strip membrane proteins (CASP) family. In terms of assembly, homodimer and heterodimers.

It localises to the cell membrane. The chain is CASP-like protein 2U2 from Pteridium aquilinum subsp. aquilinum (Bracken fern).